Reading from the N-terminus, the 465-residue chain is Asparagine--tRNA ligase (465 aa).

The protein belongs to the class-II aminoacyl-tRNA synthetase family. As to quaternary structure, homodimer.

Its subcellular location is the cytoplasm. The enzyme catalyses tRNA(Asn) + L-asparagine + ATP = L-asparaginyl-tRNA(Asn) + AMP + diphosphate + H(+). The chain is Asparagine--tRNA ligase from Pseudoalteromonas translucida (strain TAC 125).